The following is a 136-amino-acid chain: Large-conductance mechanosensitive channel (136 aa).

2 helical membrane passes run 10–30 (FAMR…AAFG) and 76–96 (GAFI…FIAI).

This sequence belongs to the MscL family. In terms of assembly, homopentamer.

It localises to the cell inner membrane. In terms of biological role, channel that opens in response to stretch forces in the membrane lipid bilayer. May participate in the regulation of osmotic pressure changes within the cell. In Pectobacterium atrosepticum (strain SCRI 1043 / ATCC BAA-672) (Erwinia carotovora subsp. atroseptica), this protein is Large-conductance mechanosensitive channel.